Here is a 284-residue protein sequence, read N- to C-terminus: Acetylglutamate kinase (284 aa).

Residues G66 to G67, R88, and N179 contribute to the substrate site.

The protein belongs to the acetylglutamate kinase family. ArgB subfamily.

Its subcellular location is the cytoplasm. It carries out the reaction N-acetyl-L-glutamate + ATP = N-acetyl-L-glutamyl 5-phosphate + ADP. It functions in the pathway amino-acid biosynthesis; L-arginine biosynthesis; N(2)-acetyl-L-ornithine from L-glutamate: step 2/4. Its function is as follows. Catalyzes the ATP-dependent phosphorylation of N-acetyl-L-glutamate. The sequence is that of Acetylglutamate kinase from Actinobacillus pleuropneumoniae serotype 3 (strain JL03).